The primary structure comprises 597 residues: tRNA uridine 5-carboxymethylaminomethyl modification enzyme MnmG (597 aa).

11-16 (GAGHAG) contributes to the FAD binding site. 275–289 (SPRYCPSIEEKIERY) contacts NAD(+).

The protein belongs to the MnmG family. As to quaternary structure, homodimer. Heterotetramer of two MnmE and two MnmG subunits. Requires FAD as cofactor.

Its subcellular location is the cytoplasm. NAD-binding protein involved in the addition of a carboxymethylaminomethyl (cmnm) group at the wobble position (U34) of certain tRNAs, forming tRNA-cmnm(5)s(2)U34. This Endomicrobium trichonymphae protein is tRNA uridine 5-carboxymethylaminomethyl modification enzyme MnmG.